Reading from the N-terminus, the 134-residue chain is uncharacterized protein (134 aa).

A run of 3 helical transmembrane segments spans residues 5–25, 30–50, and 62–82; these read FGIF…FGGF, LILL…ETII, and LVKK…DQLL.

The protein belongs to the bacteriophage holin family. Cp-1 holin subfamily.

It is found in the cell membrane. This is an uncharacterized protein from Bacillus subtilis (strain 168).